Reading from the N-terminus, the 75-residue chain is Small ribosomal subunit protein bS18 (75 aa).

It belongs to the bacterial ribosomal protein bS18 family. Part of the 30S ribosomal subunit. Forms a tight heterodimer with protein bS6.

Its function is as follows. Binds as a heterodimer with protein bS6 to the central domain of the 16S rRNA, where it helps stabilize the platform of the 30S subunit. In Psychromonas ingrahamii (strain DSM 17664 / CCUG 51855 / 37), this protein is Small ribosomal subunit protein bS18.